A 230-amino-acid chain; its full sequence is Ribosome biogenesis protein SLX9 homolog (230 aa).

A compositionally biased stretch (basic residues) spans methionine 1 to valine 11. Disordered regions lie at residues methionine 1–glycine 42 and leucine 155–glutamine 187. Residues glycine 25–alanine 38 are compositionally biased toward pro residues. Threonine 34 carries the post-translational modification Phosphothreonine. Residues arginine 166 to glutamate 177 show a composition bias toward basic and acidic residues. Serine 203 carries the phosphoserine modification.

It belongs to the SLX9 family. As to expression, not detected in any tested tissue.

The protein resides in the nucleus. It is found in the nucleolus. In terms of biological role, may be involved in ribosome biogenesis. This Homo sapiens (Human) protein is Ribosome biogenesis protein SLX9 homolog.